We begin with the raw amino-acid sequence, 1095 residues long: Solute carrier family 12 member 1 (1095 aa).

The Cytoplasmic portion of the chain corresponds to 1-173; it reads MSVNIPSNSV…EEDVTGVVKF (173 aa). The short motif at 16-19 is the RFXV motif element; that stretch reads RFQV. Residues 26–45 are disordered; that stretch reads HGSGAAMSDSTDPPHYEETS. 2 positions are modified to phosphoserine: Ser-57 and Ser-87. Phosphothreonine occurs at positions 91, 96, 101, and 114. Position 116 is a phosphoserine (Ser-116). Phosphoserine; by AMPK is present on Ser-126. The residue at position 144 (Ser-144) is a Phosphoserine. The chain crosses the membrane as a helical span at residues 174-194; sequence GWVKGVLVRCMLNIWGVMLFI. The Extracellular segment spans residues 195-197; it reads RLS. Residues 198-218 form a helical membrane-spanning segment; sequence WIVGEAGIGLGVIIIGLSVVV. The Cytoplasmic segment spans residues 219-255; it reads TTLTGISMSAICTNGVVRGGGAYYLISRSLGPEFGGS. Residues 256-276 traverse the membrane as a helical segment; sequence IGLIFRFANAVRVAMYVVGFA. The Extracellular portion of the chain corresponds to 277 to 298; it reads ETVVDLLKESDSMMVDPTNDIR. Residues 299–319 form a helical membrane-spanning segment; the sequence is IIGSITVVILLGISVAGMEWE. The Cytoplasmic portion of the chain corresponds to 320–323; it reads AKAQ. A helical membrane pass occupies residues 324–344; it reads VILLVILLIGIANFFIGTVIP. The Extracellular segment spans residues 345–375; that stretch reads SNNEKKSRGFFNYQASIFAENFGPSFTEGEG. A helical membrane pass occupies residues 376–396; it reads FFSVFAIFFPAATGILAGANI. The Cytoplasmic portion of the chain corresponds to 397–413; the sequence is SGDLEDPQDAIPRGTML. Residues 414-434 form a helical membrane-spanning segment; the sequence is AIFITTVAYIGVAICVRACVV. The Extracellular segment spans residues 435-546; sequence RDATGSMNDT…NNEPLRGYFL (112 aa). N-linked (GlcNAc...) asparagine glycans are attached at residues Asn-442 and Asn-452. 2 helical membrane passes run 547-567 and 568-588; these read TFVI…APII and SNFF…ASYA. The Extracellular segment spans residues 589–605; it reads KSPGWRPAYGIYNMWVS. Residues 606-626 form a helical membrane-spanning segment; that stretch reads LFGAILCCAVMFVINWWAAVI. Residues 627-1095 are Cytoplasmic-facing; it reads TYVIELFLYI…NHKNVLTFYS (469 aa).

This sequence belongs to the SLC12A transporter family. As to quaternary structure, when phosphorylated, interacts with PPP3CB. In terms of processing, phosphorylated at Ser-87, Thr-96 and Thr-101 by OXSR1/OSR1 and STK39/SPAK downstream of WNK kinases (WNK1, WNK2, WNK3 or WNK4), promoting its activity. In terms of tissue distribution, expressed predominantly in kidney (at protein level).

The protein resides in the apical cell membrane. It catalyses the reaction K(+)(out) + 2 chloride(out) + Na(+)(out) = K(+)(in) + 2 chloride(in) + Na(+)(in). With respect to regulation, activated following phosphorylation by OXSR1/OSR1 and STK39/SPAK downstream of WNK kinases (WNK1, WNK2, WNK3 or WNK4). Its function is as follows. Renal sodium, potassium and chloride ion cotransporter that mediates the transepithelial NaCl reabsorption in the thick ascending limb and plays an essential role in the urinary concentration and volume regulation. Electrically silent transporter system. The chain is Solute carrier family 12 member 1 (Slc12a1) from Rattus norvegicus (Rat).